The primary structure comprises 1109 residues: MIQNLQRKDSQWTPFILPDLISIQRDSFLLFLERGLATELSHVTPLTGSHFRITLCSHGYRLKRPKVSIQEAVYQATSYSAALYVNVETNQSNLGTQETQIQSVWMGDIPLMTSRGHFIINGSSRVVVNQIVRSPGIYFKEMIDQKHRRMFQASIISNRGSWVRLETDVDGMIWVRMDKAKKISILIVLEAMGLSKKTIFRSLKSPEFLFKALQQLLAKKRWQDKVYELIPQSTTDALFHLYTKLSPDKPGNTLTARRVLYEKLMDAKRYDVGLVGRVKLNKKLKLPVPEHVHTLRPVDFLAATDYLIGLEYGRGQVDDIDHLKNRRVRCAGELIQSQLRIGLNRLERTMQGRISRPGELPGMSSLMNPKPVMAALREFFGSNPLSQFMDQTNPLAELTHKRRLSSLGPGGLSQDRAGMAVREIHPSQYGRICPIETPEGPNAGLIGSMATYARLNQYGGLECPFYQVVEGKVLYEFGPIFLTAEQEDQVTVVAGDILDQRKLMVAVAEGRDPLDPAVRPTLPDRPLILRSRQEFHTGSFRDVNYVGIAPTQMISVATSLIPFLEHDDANRALMGSNMQRQAVPLLKTEAPIIGTGLEAQVAADAGGVVQSPFEGIVVYVDATRIVVSTSKSKLALSKKRKIHESNVFLQVYQRSNQGTCIHQRPIIPLHTPVIRGDLLADGSSTSGGQIALGKNLLVAYMPWEGYNFEDAILISERLIYDDLYTSLHIERYEVETQHTKLGPEEITKSIVHETDDKLPYRWLDERGIVMRGAWVEPGDVLIGKITPKEEKELTPELRLVYAIFGKRPKGFRDTSLRVPQGVRGRVVDVRMIRDEDTKVVHVYVCQQRQIQVGDKMAGRHGNKGIVSRIVPRQDMPYLQDGTPVDMVLNPLGVPSRMNVGQVFECLLGLAGQRLGQQLKVRAFDEMYGAEASRHLVYNKLHEASEVTGHHWLFDPNHPGKSRLIDGRTGDMFDQAVTIGQAYMLKLIHQVDDKIHARATGPYSLITQQPLGGRSKRGGQRLGEMEVWAFEGFGAAYTLQELLTVKSDDMQGRNEIMSAMVQGRQLPEMGTPESFKVMIRELQALCLDIGIYHRSKMTFKTEEIDLMQMR.

This sequence belongs to the RNA polymerase beta chain family. In plastids the minimal PEP RNA polymerase catalytic core is composed of four subunits: alpha, beta, beta', and beta''. When a (nuclear-encoded) sigma factor is associated with the core the holoenzyme is formed, which can initiate transcription.

It is found in the plastid. It localises to the chloroplast. The enzyme catalyses RNA(n) + a ribonucleoside 5'-triphosphate = RNA(n+1) + diphosphate. Functionally, DNA-dependent RNA polymerase catalyzes the transcription of DNA into RNA using the four ribonucleoside triphosphates as substrates. The chain is DNA-directed RNA polymerase subunit beta from Nephroselmis olivacea (Green alga).